Here is a 1087-residue protein sequence, read N- to C-terminus: Gelsolin-related protein of 125 kDa (1087 aa).

Positions 1–40 (MEEDNIVDSKEIENNVEDKKEETPSSSPSPSSSLQQQQEE) are disordered. The segment covering 7–23 (VDSKEIENNVEDKKEET) has biased composition (basic and acidic residues). Positions 24–40 (PSSSPSPSSSLQQQQEE) are enriched in low complexity. Gelsolin-like repeat units follow at residues 73–146 (PFHF…PTFL), 183–286 (FLFK…FSKW), 335–442 (GKLL…FGTE), and 465–538 (TQLF…DNFW). The stretch at 550–598 (INTFINENKEEKEKEEEEKEEEEEEEEEEEEEEEEEKDNNKTTTIIKHL) forms a coiled coil. The tract at residues 555-592 (NENKEEKEKEEEEKEEEEEEEEEEEEEEEEEKDNNKTT) is disordered. Residues 562–586 (EKEEEEKEEEEEEEEEEEEEEEEEK) show a composition bias toward acidic residues. One copy of the Gelsolin-like 5 repeat lies at 614–692 (IFKADQINPF…EQYNESPLFK (79 aa)). Positions 710-912 (IISYKQKLAE…ETVNEENEVG (203 aa)) form a coiled coil. Basic and acidic residues-rich tracts occupy residues 732 to 770 (KQQQEQEQEQQQKENNKIVEEVKEEVKEEDVKEEVKEEE), 779 to 808 (EEVKEVAKEETKEEIKEEVNDEATEVKEVN), 817 to 840 (EEVKEEVKVEVKEEEVKGEAKEEE), and 849 to 900 (EEVK…KVNE). A disordered region spans residues 732-1087 (KQQQEQEQEQ…HNRSSSLTHA (356 aa)). Residues 901–910 (ENETVNEENE) show a composition bias toward acidic residues. Composition is skewed to polar residues over residues 925–939 (ANSSSTISSPENEGS) and 950–961 (EPITPSVVSSSG). A compositionally biased stretch (basic residues) spans 983–1002 (QGRKGGRKSHGKNQPQHKKN). Residues 1018–1040 (KSLNLDIDNQSFDLNSINNNNSV) are compositionally biased toward polar residues. Positions 1047–1065 (SSPLSFSSSSINSNSTHNT) are enriched in low complexity. Basic residues predominate over residues 1066 to 1080 (PSKKNKNKNKKKHNR).

It belongs to the villin/gelsolin family. Interacts with rasD and abpC.

It localises to the cytoplasmic vesicle. Its function is as follows. Involved in phototaxis. Required for coupling photodetection to the locomotory machinery of slugs. May be essential in the natural environment for the propagation of spores. This is Gelsolin-related protein of 125 kDa (gnrA) from Dictyostelium discoideum (Social amoeba).